Reading from the N-terminus, the 194-residue chain is Thymidine kinase (194 aa).

ATP-binding positions include 15-22 (GSMFSGKS) and 88-91 (DEVQ). Glutamate 89 acts as the Proton acceptor in catalysis. Zn(2+) contacts are provided by cysteine 145, cysteine 148, cysteine 183, and histidine 186.

It belongs to the thymidine kinase family. In terms of assembly, homotetramer.

The protein localises to the cytoplasm. The enzyme catalyses thymidine + ATP = dTMP + ADP + H(+). This chain is Thymidine kinase, found in Bacillus velezensis (strain DSM 23117 / BGSC 10A6 / LMG 26770 / FZB42) (Bacillus amyloliquefaciens subsp. plantarum).